Consider the following 78-residue polypeptide: Small ribosomal subunit protein bS18c (78 aa).

Belongs to the bacterial ribosomal protein bS18 family. In terms of assembly, part of the 30S ribosomal subunit.

It localises to the plastid. The protein localises to the chloroplast. The chain is Small ribosomal subunit protein bS18c from Oltmannsiellopsis viridis (Marine flagellate).